The following is a 248-amino-acid chain: Chromatin target of PRMT1 protein (248 aa).

Position 2 is an N-acetylalanine (A2). S40, S49, and S64 each carry phosphoserine. K70 participates in a covalent cross-link: Glycyl lysine isopeptide (Lys-Gly) (interchain with G-Cter in SUMO2). The segment at 151–204 (LRRGGVRGRGGPGRGGLGRGAMGRGGIGGRGRGMIGRGRGGFGGRGRGRGRGRG) is disordered. The segment at 153-206 (RGGVRGRGGPGRGGLGRGAMGRGGIGGRGRGMIGRGRGGFGGRGRGRGRGRGAL) is interaction with PRMT1. Positions 157–195 (RGRGGPGRGGLGRGAMGRGGIGGRGRGMIGRGRGGFGGR) are enriched in gly residues. Positions 194–203 (GRGRGRGRGR) match the GAR motif; involved in 5hmC binding motif. Position 242 is a phosphothreonine (T242).

As to quaternary structure, interacts with PRMT1 and PRMT5. Interacts with the 5FMC complex; the interaction is methylation-dependent. Interacts with FYTTD1, SET and PRC1 complex members CBX4, RNF2 and PHC2; the interactions are methylation-independent. Interacts with ZNF148. Interacts with WDR77 and ER. Asymmetrically methylated by PRMT1. Symmetrically methylated by PRMT5.

Its subcellular location is the nucleus. It is found in the nucleolus. The protein localises to the nucleoplasm. It localises to the nucleus speckle. Its function is as follows. Plays an important role in the ligand-dependent activation of estrogen receptor target genes. May play a role in the silencing of fetal globin genes. Recruits the 5FMC complex to ZNF148, leading to desumoylation of ZNF148 and subsequent transactivation of ZNF148 target genes. Required for the tumorigenicity of glioblastoma cells. Binds to 5-hydroxymethylcytosine (5hmC) and associates with the methylosome complex containing PRMT1, PRMT5, MEP50 and ERH. The CHTOP-methylosome complex associated with 5hmC methylates H4R3 and transactivates genes involved in glioblastomagenesis. The chain is Chromatin target of PRMT1 protein (CHTOP) from Bos taurus (Bovine).